Consider the following 234-residue polypeptide: Large ribosomal subunit protein uL1 (234 aa).

It belongs to the universal ribosomal protein uL1 family. In terms of assembly, part of the 50S ribosomal subunit.

In terms of biological role, binds directly to 23S rRNA. The L1 stalk is quite mobile in the ribosome, and is involved in E site tRNA release. Protein L1 is also a translational repressor protein, it controls the translation of the L11 operon by binding to its mRNA. This chain is Large ribosomal subunit protein uL1, found in Prochlorococcus marinus (strain MIT 9211).